We begin with the raw amino-acid sequence, 191 residues long: ATP synthase subunit b (191 aa).

Residues 10–30 traverse the membrane as a helical segment; sequence FLVPGPTAIAELIVFLLILFI. The disordered stretch occupies residues 170–191; sequence RAQRQPAASDVVGGQQREEVHR.

It belongs to the ATPase B chain family. F-type ATPases have 2 components, F(1) - the catalytic core - and F(0) - the membrane proton channel. F(1) has five subunits: alpha(3), beta(3), gamma(1), delta(1), epsilon(1). F(0) has three main subunits: a(1), b(2) and c(10-14). The alpha and beta chains form an alternating ring which encloses part of the gamma chain. F(1) is attached to F(0) by a central stalk formed by the gamma and epsilon chains, while a peripheral stalk is formed by the delta and b chains.

The protein resides in the cell membrane. F(1)F(0) ATP synthase produces ATP from ADP in the presence of a proton or sodium gradient. F-type ATPases consist of two structural domains, F(1) containing the extramembraneous catalytic core and F(0) containing the membrane proton channel, linked together by a central stalk and a peripheral stalk. During catalysis, ATP synthesis in the catalytic domain of F(1) is coupled via a rotary mechanism of the central stalk subunits to proton translocation. In terms of biological role, component of the F(0) channel, it forms part of the peripheral stalk, linking F(1) to F(0). The sequence is that of ATP synthase subunit b from Acidothermus cellulolyticus (strain ATCC 43068 / DSM 8971 / 11B).